The primary structure comprises 68 residues: Potassium channel toxin epsilon-KTx 1.2 (68 aa).

The N-terminal stretch at 1-26 (MKFSCGFLLIFLVLSAMIATFSEVEA) is a signal peptide. 4 cysteine pairs are disulfide-bonded: Cys-30-Cys-38, Cys-33-Cys-54, Cys-37-Cys-47, and Cys-42-Cys-52. Tyr-55 bears the Tyrosine amide mark. Positions 57 to 68 (RSDLNEEFENYQ) are excised as a propeptide.

It belongs to the short scorpion toxin superfamily. Potassium channel inhibitor family. Epsilon-KTx 01 subfamily. Expressed by the venom gland.

The protein resides in the secreted. Functionally, potassium channel blocker. At 3 uM, this toxin blocks voltage-gated potassium channels rKv1.2/KCNA2 (5%), hKv1.3/KCNA3 (10%),rKv1.4/KCNA4 (20%), Kv11/hERG (24%), and Shaker-IR (27%). The chain is Potassium channel toxin epsilon-KTx 1.2 from Tityus serrulatus (Brazilian scorpion).